Reading from the N-terminus, the 1145-residue chain is MAGPSRLPDKKQASISSFFTPRNTSPLVNLSQNASKKPPPAESKSSKSTSSRKRPEPQTDDSEDDVPRDAKRRRSNGPSAATDTEDAVASLKLSSSSRTERYALNSSRPSQDEQEKEEDVAERKKKEELHRKFVKKLGHPDSMFSYRQRDTESAAVEGEGEEGEDDEEEPAPKTTAKKKGAKTGKLTPMELQFLEIKRKHMDTLLIVEVGYKFRFFGEDARIAARELSIVCIPGKFRYDEHPSEAHLDRFASASIPVHRLPVHAKRLVAAGYKVGVVRQIETAALKKAGDNRNAPFVRKLTNVYTKGTYIDETGELDQPGETTGASSGGYLLCLTETPAKGMGTDEKVNVGIIAVQPATGDIIYDEFEDGFMRREIETRLLHISPCEFLIVGDLSKATDKLIQHLSGSSTNVFGDKSRVERVPKSKTMAAESYSNVTDFYAGKAKDSDERSAALLNKVLKLPEAVMICLSAMITHLTEYGLQHIFDLTKYFQSFSTRQHMLINGTTLESLEVYRNATDHSEKGSLLWALDKTHTRFGQRLLRKWIGRPLLDQQRLEERVSAVEELLNNQSTAKVDKLVNMLKSIKADLERSLIRIYYGKCTRPELLSTLQTLQKISFEYARVKSPADTGFSSTLLTSAIMTLPSISPMVTAHLSKINAEAARKDDKYAFFLEQHETEDISEHKLGIAAVEQDLDEHRSEAAKDLGKKVPVNYVTVAGIEYLIEVPNTDLKRVPASWAKISGTKKVSRFHTPTVLRLIAERDQHKESLASACDQAFSDLLSQIAGEYQPLRDAVSSLSTLDCLLSLSTVAALPGYTKPTFLPSSHPSFLSITEGRHPIAEHLLPNGYIPFTMSLGTLSSSASSPDPNPTSPSGKPALAQLITGPNMGGKSSYTRAVALLVLLAQIGSFVPATSMSLTLSDAIFTRMGARDNLFKGESTFMVEVSETAAILRQATPRSLVVLDELGRGTSTHDGRAIAGAVLEYVVRDVGCLMLFVTHYQDLAGVAEGLTVGEGEEKRRGVECVHMRFASNKSRTSMDDDAMEVDGDGDGQEGAGADKDEEEEITFLYDLAPGVAHRSYGLNVARLARIPRKVLEVAARKSSELEKEVRAKRIKGAMGLVGGVLYGGGAPGDQEEKLEQLVGLVEQL.

Disordered regions lie at residues 1–183 (MAGP…GAKT) and 857–879 (SSSASSPDPNPTSPSGKPALAQL). Positions 13-33 (ASISSFFTPRNTSPLVNLSQN) are enriched in polar residues. The segment covering 121-131 (AERKKKEELHR) has biased composition (basic and acidic residues). Residues 158–169 (GEGEEGEDDEEE) are compositionally biased toward acidic residues. A mispair-binding domain region spans residues 183–307 (TGKLTPMELQ…RKLTNVYTKG (125 aa)). Residue 882 to 889 (GPNMGGKS) coordinates ATP. The tract at residues 1030-1056 (KSRTSMDDDAMEVDGDGDGQEGAGADK) is disordered. Over residues 1036-1048 (DDDAMEVDGDGDG) the composition is skewed to acidic residues.

This sequence belongs to the DNA mismatch repair MutS family. MSH3 subfamily. Heterodimer consisting of msh-2-msh-3 (MutS beta). Forms a ternary complex with MutL alpha (mlh-1-pms-1).

Its subcellular location is the nucleus. Its function is as follows. Component of the post-replicative DNA mismatch repair system (MMR). Heterodimerizes with msh-2 to form MutS beta, which binds to DNA mismatches thereby initiating DNA repair. Msh-3 provides substrate-binding and substrate specificity to the complex. When bound, the MutS beta heterodimer bends the DNA helix and shields approximately 20 base pairs. Acts mainly to repair insertion-deletion loops (IDLs) from 2 to 13 nucleotides in size, but can also repair base-base and single insertion-deletion mismatches that occur during replication. After mismatch binding, forms a ternary complex with the MutL alpha heterodimer, which is thought to be responsible for directing the downstream MMR events, including strand discrimination, excision, and resynthesis. ATP binding and hydrolysis play a pivotal role in mismatch repair functions. The protein is DNA mismatch repair protein msh-3 (msh-3) of Neurospora crassa (strain ATCC 24698 / 74-OR23-1A / CBS 708.71 / DSM 1257 / FGSC 987).